Reading from the N-terminus, the 181-residue chain is NAD(P)H-quinone oxidoreductase subunit I, chloroplastic (181 aa).

2 consecutive 4Fe-4S ferredoxin-type domains span residues 52-81 and 92-121; these read GRIHFEFDKCIACEVCVRVCPINLPVVDWE and KSYSIDFGVCIFCGNCVEYCPTNCLSMTEE. Positions 61, 64, 67, 71, 101, 104, 107, and 111 each coordinate [4Fe-4S] cluster.

The protein belongs to the complex I 23 kDa subunit family. As to quaternary structure, NDH is composed of at least 16 different subunits, 5 of which are encoded in the nucleus. The cofactor is [4Fe-4S] cluster.

Its subcellular location is the plastid. It localises to the chloroplast thylakoid membrane. The catalysed reaction is a plastoquinone + NADH + (n+1) H(+)(in) = a plastoquinol + NAD(+) + n H(+)(out). It carries out the reaction a plastoquinone + NADPH + (n+1) H(+)(in) = a plastoquinol + NADP(+) + n H(+)(out). NDH shuttles electrons from NAD(P)H:plastoquinone, via FMN and iron-sulfur (Fe-S) centers, to quinones in the photosynthetic chain and possibly in a chloroplast respiratory chain. The immediate electron acceptor for the enzyme in this species is believed to be plastoquinone. Couples the redox reaction to proton translocation, and thus conserves the redox energy in a proton gradient. In Zygnema circumcarinatum (Green alga), this protein is NAD(P)H-quinone oxidoreductase subunit I, chloroplastic.